The sequence spans 603 residues: Isocitrate dehydrogenase kinase/phosphatase (603 aa).

ATP contacts are provided by residues 327 to 333 and lysine 348; that span reads APGIKGL. Aspartate 383 is an active-site residue.

This sequence belongs to the AceK family.

The protein resides in the cytoplasm. It carries out the reaction L-seryl-[isocitrate dehydrogenase] + ATP = O-phospho-L-seryl-[isocitrate dehydrogenase] + ADP + H(+). Bifunctional enzyme which can phosphorylate or dephosphorylate isocitrate dehydrogenase (IDH) on a specific serine residue. This is a regulatory mechanism which enables bacteria to bypass the Krebs cycle via the glyoxylate shunt in response to the source of carbon. When bacteria are grown on glucose, IDH is fully active and unphosphorylated, but when grown on acetate or ethanol, the activity of IDH declines drastically concomitant with its phosphorylation. In Burkholderia thailandensis (strain ATCC 700388 / DSM 13276 / CCUG 48851 / CIP 106301 / E264), this protein is Isocitrate dehydrogenase kinase/phosphatase.